The chain runs to 385 residues: Anhydro-N-acetylmuramic acid kinase (385 aa).

12–19 is a binding site for ATP; sequence GTSLDGID.

This sequence belongs to the anhydro-N-acetylmuramic acid kinase family.

The enzyme catalyses 1,6-anhydro-N-acetyl-beta-muramate + ATP + H2O = N-acetyl-D-muramate 6-phosphate + ADP + H(+). Its pathway is amino-sugar metabolism; 1,6-anhydro-N-acetylmuramate degradation. The protein operates within cell wall biogenesis; peptidoglycan recycling. In terms of biological role, catalyzes the specific phosphorylation of 1,6-anhydro-N-acetylmuramic acid (anhMurNAc) with the simultaneous cleavage of the 1,6-anhydro ring, generating MurNAc-6-P. Is required for the utilization of anhMurNAc either imported from the medium or derived from its own cell wall murein, and thus plays a role in cell wall recycling. The polypeptide is Anhydro-N-acetylmuramic acid kinase (Bacillus thuringiensis (strain Al Hakam)).